A 572-amino-acid chain; its full sequence is Proline--tRNA ligase (572 aa).

The protein belongs to the class-II aminoacyl-tRNA synthetase family. ProS type 1 subfamily. As to quaternary structure, homodimer.

The protein localises to the cytoplasm. The enzyme catalyses tRNA(Pro) + L-proline + ATP = L-prolyl-tRNA(Pro) + AMP + diphosphate. Its function is as follows. Catalyzes the attachment of proline to tRNA(Pro) in a two-step reaction: proline is first activated by ATP to form Pro-AMP and then transferred to the acceptor end of tRNA(Pro). As ProRS can inadvertently accommodate and process non-cognate amino acids such as alanine and cysteine, to avoid such errors it has two additional distinct editing activities against alanine. One activity is designated as 'pretransfer' editing and involves the tRNA(Pro)-independent hydrolysis of activated Ala-AMP. The other activity is designated 'posttransfer' editing and involves deacylation of mischarged Ala-tRNA(Pro). The misacylated Cys-tRNA(Pro) is not edited by ProRS. The protein is Proline--tRNA ligase of Psychrobacter arcticus (strain DSM 17307 / VKM B-2377 / 273-4).